The chain runs to 480 residues: Major capsid protein (480 aa).

It localises to the virion. Major protein of the capsid. The sequence is that of Major capsid protein (MCP-1) from Trichoplusia ni ascovirus 2c (TnAV-2c).